Reading from the N-terminus, the 130-residue chain is Small ribosomal subunit protein uS8 (130 aa).

It belongs to the universal ribosomal protein uS8 family. In terms of assembly, part of the 30S ribosomal subunit. Contacts proteins S5 and S12.

In terms of biological role, one of the primary rRNA binding proteins, it binds directly to 16S rRNA central domain where it helps coordinate assembly of the platform of the 30S subunit. This is Small ribosomal subunit protein uS8 from Saccharophagus degradans (strain 2-40 / ATCC 43961 / DSM 17024).